The primary structure comprises 402 residues: Dual-specificity RNA methyltransferase RlmN (402 aa).

Residue Glu94 is the Proton acceptor of the active site. The 252-residue stretch at 100–351 (EDDRGTLCIS…ATVRKTRGDD (252 aa)) folds into the Radical SAM core domain. Cysteines 107 and 356 form a disulfide. [4Fe-4S] cluster contacts are provided by Cys114, Cys118, and Cys121. Residues 182-183 (GE), Ser214, 236-238 (SLH), and Asn313 each bind S-adenosyl-L-methionine. The active-site S-methylcysteine intermediate is the Cys356.

It belongs to the radical SAM superfamily. RlmN family. The cofactor is [4Fe-4S] cluster.

It localises to the cytoplasm. The catalysed reaction is adenosine(2503) in 23S rRNA + 2 reduced [2Fe-2S]-[ferredoxin] + 2 S-adenosyl-L-methionine = 2-methyladenosine(2503) in 23S rRNA + 5'-deoxyadenosine + L-methionine + 2 oxidized [2Fe-2S]-[ferredoxin] + S-adenosyl-L-homocysteine. The enzyme catalyses adenosine(37) in tRNA + 2 reduced [2Fe-2S]-[ferredoxin] + 2 S-adenosyl-L-methionine = 2-methyladenosine(37) in tRNA + 5'-deoxyadenosine + L-methionine + 2 oxidized [2Fe-2S]-[ferredoxin] + S-adenosyl-L-homocysteine. Functionally, specifically methylates position 2 of adenine 2503 in 23S rRNA and position 2 of adenine 37 in tRNAs. m2A2503 modification seems to play a crucial role in the proofreading step occurring at the peptidyl transferase center and thus would serve to optimize ribosomal fidelity. This chain is Dual-specificity RNA methyltransferase RlmN, found in Polynucleobacter asymbioticus (strain DSM 18221 / CIP 109841 / QLW-P1DMWA-1) (Polynucleobacter necessarius subsp. asymbioticus).